The primary structure comprises 136 residues: Small ribosomal subunit protein uS8c (136 aa).

This sequence belongs to the universal ribosomal protein uS8 family. Part of the 30S ribosomal subunit.

It is found in the plastid. The protein localises to the chloroplast. One of the primary rRNA binding proteins, it binds directly to 16S rRNA central domain where it helps coordinate assembly of the platform of the 30S subunit. In Hordeum vulgare (Barley), this protein is Small ribosomal subunit protein uS8c (rps8).